The primary structure comprises 78 residues: Antitoxin VapB1 (78 aa).

Residues 3–44 enclose the SpoVT-AbrB domain; it reads TKVFQSGNSQAVRIPMDFRFDVDTVEIFRKENGDVVLRPVSK.

This sequence belongs to the VapB family. Forms multimers, as well forming as a complex with VapC1.

Functionally, antitoxin component of a type II toxin-antitoxin (TA) system. Upon expression in E.coli neutralizes the effect of toxin VapC1. In vitro inhibits the RNase activity of VapC1. This is Antitoxin VapB1 (vapB1) from Haemophilus influenzae (strain R2866).